A 433-amino-acid polypeptide reads, in one-letter code: Enolase (433 aa).

Residue Q167 coordinates (2R)-2-phosphoglycerate. The active-site Proton donor is the E209. Mg(2+) is bound by residues D246, E287, and D314. Residues K339, R368, S369, and K390 each contribute to the (2R)-2-phosphoglycerate site. K339 (proton acceptor) is an active-site residue.

Belongs to the enolase family. It depends on Mg(2+) as a cofactor.

Its subcellular location is the cytoplasm. It is found in the secreted. The protein resides in the cell surface. The catalysed reaction is (2R)-2-phosphoglycerate = phosphoenolpyruvate + H2O. The protein operates within carbohydrate degradation; glycolysis; pyruvate from D-glyceraldehyde 3-phosphate: step 4/5. In terms of biological role, catalyzes the reversible conversion of 2-phosphoglycerate (2-PG) into phosphoenolpyruvate (PEP). It is essential for the degradation of carbohydrates via glycolysis. This Prochlorococcus marinus (strain NATL2A) protein is Enolase.